We begin with the raw amino-acid sequence, 99 residues long: Protein SPIRAL1-like 5 (99 aa).

Positions 1–12 (MSRGGSFGGGQS) are enriched in gly residues. Residues 1–99 (MSRGGSFGGG…SSLGYLFGDK (99 aa)) form a disordered region. Residues 27–39 (TPAPPVAPKPAPP) are compositionally biased toward pro residues. Positions 56-73 (KISNNNYQRVQGQNSGNF) are enriched in polar residues. Position 58 is a phosphoserine (serine 58).

Belongs to the SPIRAL1 family. As to expression, expressed exclusively in stems and flowers.

Acts redundantly with SPR1 in maintaining the cortical microtubules organization essential for anisotropic cell growth. The protein is Protein SPIRAL1-like 5 (SP1L5) of Arabidopsis thaliana (Mouse-ear cress).